A 798-amino-acid polypeptide reads, in one-letter code: Cold shock domain-containing protein E1 (798 aa).

In terms of domain architecture, CSD 1 spans 26–87 (ETGVIEKLLT…RTGKPIAIKL (62 aa)). Lys81 is modified (N6-acetyllysine). A Glycyl lysine isopeptide (Lys-Gly) (interchain with G-Cter in SUMO2) cross-link involves residue Lys91. Ser123 carries the phosphoserine modification. Residues 136 to 179 (VFYLTYTSEDVEGNVQLETGDKINFVIDNNKHTGAVSARNIMLL) form the CSD 2; truncated domain. The CSD 3 domain maps to 186-245 (YQGVVCAMKEAFGFIERGDVVKEIFFHYSEFKGDLETLQPGDDVEFTIKDRNGKEVATDV). The residue at position 276 (Ser276) is a Phosphoserine. The CSD 4; truncated domain maps to 297 to 337 (LPFGDKDTKSKVTLLEGDHVRFNISTDRRDKLERATNIEVL). 2 consecutive CSD domains span residues 349–410 (EMGV…AIRI) and 447–507 (NKGK…ATCV). Ser514 bears the Phosphoserine mark. In terms of domain architecture, CSD 7 spans 519–579 (LLGYVATLKD…KGNKVSAEKV (61 aa)). Ser584 is subject to Phosphoserine. 2 CSD domains span residues 610-670 (PTQI…AYNI) and 674-735 (RRAT…ACNV). The 42-residue stretch at 748–789 (PRPDRLVNRLKNITLDDASAPRLMVLRQPRGPDNSMGFGAER) folds into the SUZ-C domain. At Thr761 the chain carries Phosphothreonine.

The protein belongs to the UNR family. As to quaternary structure, component of a multi subunit autoregulatory ribonucleoprotein complex (ARC), at least composed of IGF2BP1, PABPC1 and CSDE1. Interacts with STRAP. Part of a complex associated with the FOS mCRD domain and consisting of PABPC1, PAIP1, HNRPD and SYNCRIP. The interaction with PABPC1 is direct and RNA-independent. Interacts with EIF4ENIF1/4E-T.

It localises to the cytoplasm. Its subcellular location is the stress granule. It is found in the P-body. In terms of biological role, RNA-binding protein involved in translationally coupled mRNA turnover. Implicated with other RNA-binding proteins in the cytoplasmic deadenylation/translational and decay interplay of the FOS mRNA mediated by the major coding-region determinant of instability (mCRD) domain. Required for efficient formation of stress granules. This is Cold shock domain-containing protein E1 from Rattus norvegicus (Rat).